A 160-amino-acid chain; its full sequence is Protein MGF 300-2R (160 aa).

It belongs to the asfivirus MGF 300 family.

In terms of biological role, plays a role in virus cell tropism, and may be required for efficient virus replication in macrophages. In African swine fever virus (isolate Tick/South Africa/Pretoriuskop Pr4/1996) (ASFV), this protein is Protein MGF 300-2R.